Reading from the N-terminus, the 330-residue chain is tRNA (guanine(37)-N(1))-methyltransferase Trm5b (330 aa).

S-adenosyl-L-methionine is bound by residues R173, 211–212 (DI), 238–239 (DS), and N252.

Belongs to the class I-like SAM-binding methyltransferase superfamily. TRM5/TYW2 family.

The protein localises to the cytoplasm. It catalyses the reaction guanosine(37) in tRNA + S-adenosyl-L-methionine = N(1)-methylguanosine(37) in tRNA + S-adenosyl-L-homocysteine + H(+). Specifically methylates the N1 position of guanosine-37 in various tRNAs. In Pyrococcus abyssi (strain GE5 / Orsay), this protein is tRNA (guanine(37)-N(1))-methyltransferase Trm5b.